Here is a 349-residue protein sequence, read N- to C-terminus: Phenylalanine--tRNA ligase alpha subunit (349 aa).

E258 contacts Mg(2+).

It belongs to the class-II aminoacyl-tRNA synthetase family. Phe-tRNA synthetase alpha subunit type 1 subfamily. In terms of assembly, tetramer of two alpha and two beta subunits. Requires Mg(2+) as cofactor.

It is found in the cytoplasm. The enzyme catalyses tRNA(Phe) + L-phenylalanine + ATP = L-phenylalanyl-tRNA(Phe) + AMP + diphosphate + H(+). This chain is Phenylalanine--tRNA ligase alpha subunit, found in Rickettsia bellii (strain RML369-C).